A 66-amino-acid polypeptide reads, in one-letter code: MPKMKTKSAAKKRFSFTATGKVKAGPAGKRHGMIKRSTKFIRDVTGTMILSDADAKIVKKYMPYDR.

Belongs to the bacterial ribosomal protein bL35 family.

This is Large ribosomal subunit protein bL35 from Cereibacter sphaeroides (strain ATCC 17029 / ATH 2.4.9) (Rhodobacter sphaeroides).